Here is a 335-residue protein sequence, read N- to C-terminus: Fructose-1,6-bisphosphatase class 1 (335 aa).

Positions 92, 114, 116, and 117 each coordinate Mg(2+). Substrate contacts are provided by residues 117-120 (DGSS) and N209. Mg(2+) is bound at residue E281.

Belongs to the FBPase class 1 family. In terms of assembly, homotetramer. It depends on Mg(2+) as a cofactor.

Its subcellular location is the cytoplasm. It catalyses the reaction beta-D-fructose 1,6-bisphosphate + H2O = beta-D-fructose 6-phosphate + phosphate. Its pathway is carbohydrate biosynthesis; gluconeogenesis. This Nitrosococcus oceani (strain ATCC 19707 / BCRC 17464 / JCM 30415 / NCIMB 11848 / C-107) protein is Fructose-1,6-bisphosphatase class 1.